We begin with the raw amino-acid sequence, 275 residues long: Putative phosphoenolpyruvate synthase regulatory protein (275 aa).

153-160 (GVSRTGKT) provides a ligand contact to ADP.

This sequence belongs to the pyruvate, phosphate/water dikinase regulatory protein family. PSRP subfamily.

It catalyses the reaction [pyruvate, water dikinase] + ADP = [pyruvate, water dikinase]-phosphate + AMP + H(+). The catalysed reaction is [pyruvate, water dikinase]-phosphate + phosphate + H(+) = [pyruvate, water dikinase] + diphosphate. Bifunctional serine/threonine kinase and phosphorylase involved in the regulation of the phosphoenolpyruvate synthase (PEPS) by catalyzing its phosphorylation/dephosphorylation. The polypeptide is Putative phosphoenolpyruvate synthase regulatory protein (Nitrosomonas europaea (strain ATCC 19718 / CIP 103999 / KCTC 2705 / NBRC 14298)).